Consider the following 362-residue polypeptide: Peptide chain release factor 1 (362 aa).

An N5-methylglutamine modification is found at glutamine 235.

Belongs to the prokaryotic/mitochondrial release factor family. Post-translationally, methylated by PrmC. Methylation increases the termination efficiency of RF1.

The protein resides in the cytoplasm. In terms of biological role, peptide chain release factor 1 directs the termination of translation in response to the peptide chain termination codons UAG and UAA. This Acinetobacter baumannii (strain AYE) protein is Peptide chain release factor 1.